The sequence spans 150 residues: Macrodomain Ter protein (150 aa).

Belongs to the MatP family. In terms of assembly, homodimer.

It is found in the cytoplasm. Functionally, required for spatial organization of the terminus region of the chromosome (Ter macrodomain) during the cell cycle. Prevents early segregation of duplicated Ter macrodomains during cell division. Binds specifically to matS, which is a 13 bp signature motif repeated within the Ter macrodomain. In Escherichia coli O6:K15:H31 (strain 536 / UPEC), this protein is Macrodomain Ter protein.